A 192-amino-acid chain; its full sequence is Elongation factor P (192 aa).

Lys-37 bears the N6-(3,6-diaminohexanoyl)-5-hydroxylysine mark.

This sequence belongs to the elongation factor P family. In terms of processing, may be beta-lysylated on the epsilon-amino group of Lys-37 by the combined action of EpmA and EpmB, and then hydroxylated on the C5 position of the same residue by EpmC (if this protein is present). Lysylation is critical for the stimulatory effect of EF-P on peptide-bond formation. The lysylation moiety may extend toward the peptidyltransferase center and stabilize the terminal 3-CCA end of the tRNA. Hydroxylation of the C5 position on Lys-37 may allow additional potential stabilizing hydrogen-bond interactions with the P-tRNA.

It is found in the cytoplasm. It participates in protein biosynthesis; polypeptide chain elongation. Functionally, involved in peptide bond synthesis. Alleviates ribosome stalling that occurs when 3 or more consecutive Pro residues or the sequence PPG is present in a protein, possibly by augmenting the peptidyl transferase activity of the ribosome. Modification of Lys-37 is required for alleviation. The chain is Elongation factor P from Acinetobacter baylyi (strain ATCC 33305 / BD413 / ADP1).